The sequence spans 313 residues: Ribosomal RNA small subunit methyltransferase H (313 aa).

S-adenosyl-L-methionine contacts are provided by residues 35-37 (GGH), Asp55, Phe80, Asp102, and Gln109.

Belongs to the methyltransferase superfamily. RsmH family.

The protein localises to the cytoplasm. It catalyses the reaction cytidine(1402) in 16S rRNA + S-adenosyl-L-methionine = N(4)-methylcytidine(1402) in 16S rRNA + S-adenosyl-L-homocysteine + H(+). Functionally, specifically methylates the N4 position of cytidine in position 1402 (C1402) of 16S rRNA. The polypeptide is Ribosomal RNA small subunit methyltransferase H (Shewanella sp. (strain MR-7)).